Here is a 306-residue protein sequence, read N- to C-terminus: Ciliary microtubule inner protein 2B (306 aa).

Positions 61-92 are disordered; that stretch reads QSNPFPPPRDHSFDGGSQELGGRRQHPGDPNL.

Belongs to the CIMIP2 family. As to expression, expressed in airway epithelial cells.

It is found in the cytoplasm. It localises to the cytoskeleton. Its subcellular location is the cilium axoneme. Its function is as follows. Microtubule inner protein (MIP) part of the dynein-decorated doublet microtubules (DMTs) in cilia axoneme, which is required for motile cilia beating. The chain is Ciliary microtubule inner protein 2B (cimip2b) from Xenopus tropicalis (Western clawed frog).